Consider the following 255-residue polypeptide: MRWAAATLRGKARPRGRAGVTTPAPGNRTGTCAKLRLPPQATFQVLRGNGASVGTVLMFRCPSNHQMVGSGLLTCTWKGSIAEWSSGSPVCKLVPPHETFGFKVAVIASIVSCAIILLMSMAFLTCCLLKCVKKSKRRRSNRSAQLWSQLKDEDLETVQAAYLGLKHFNKPVSGPSQAHDNHSFTTDHGESTSKLASVTRSVDKDPGIPRALSLSGSSSSPQAQVMVHMANPRQPLPASGLATGMPQQPAAYALG.

The disordered stretch occupies residues 1–25 (MRWAAATLRGKARPRGRAGVTTPAP). Residues 1 to 103 (MRWAAATLRG…VPPHETFGFK (103 aa)) lie on the Extracellular side of the membrane. The N-linked (GlcNAc...) asparagine glycan is linked to Asn27. One can recognise a Sushi domain in the interval 30 to 93 (GTCAKLRLPP…WSSGSPVCKL (64 aa)). Disulfide bonds link Cys32–Cys75 and Cys61–Cys91. Residues 104–124 (VAVIASIVSCAIILLMSMAFL) traverse the membrane as a helical segment. The Cytoplasmic portion of the chain corresponds to 125–255 (TCCLLKCVKK…PQQPAAYALG (131 aa)). Positions 173-255 (SGPSQAHDNH…PQQPAAYALG (83 aa)) are disordered. Over residues 179-191 (HDNHSFTTDHGES) the composition is skewed to basic and acidic residues.

Highly expressed in estrogen receptor-positive breast tumors.

The protein resides in the cell membrane. In terms of biological role, may play a role in breast tumorigenesis by promoting estrogen-dependent cell proliferation, cell-cell interactions and migration. This chain is Sushi domain-containing protein 3 (SUSD3), found in Homo sapiens (Human).